The primary structure comprises 157 residues: SsrA-binding protein (157 aa).

Positions 131-157 (KQLHDKRDTEKKRDWSREKGRIMRARG) are disordered. Positions 132–151 (QLHDKRDTEKKRDWSREKGR) are enriched in basic and acidic residues.

Belongs to the SmpB family.

The protein resides in the cytoplasm. Its function is as follows. Required for rescue of stalled ribosomes mediated by trans-translation. Binds to transfer-messenger RNA (tmRNA), required for stable association of tmRNA with ribosomes. tmRNA and SmpB together mimic tRNA shape, replacing the anticodon stem-loop with SmpB. tmRNA is encoded by the ssrA gene; the 2 termini fold to resemble tRNA(Ala) and it encodes a 'tag peptide', a short internal open reading frame. During trans-translation Ala-aminoacylated tmRNA acts like a tRNA, entering the A-site of stalled ribosomes, displacing the stalled mRNA. The ribosome then switches to translate the ORF on the tmRNA; the nascent peptide is terminated with the 'tag peptide' encoded by the tmRNA and targeted for degradation. The ribosome is freed to recommence translation, which seems to be the essential function of trans-translation. In Rhodopseudomonas palustris (strain BisB18), this protein is SsrA-binding protein.